We begin with the raw amino-acid sequence, 276 residues long: MVLIEFLTGFFYLYGKRLFSISKVMDMICLDYYTIIPAPLAMMLAARIKNYDLMKRLHEWEISVDYALLVVDDVPSIDFCLSLGAKSPTRAQKRQLLRDNTFNPVYKYLMNCSGFPTRREKNIPCDVQCERLQKNIIKELVFNCSVLLEMVLHTEREYAYALHCAAKHNQLPILMYCWQQSTDAESILLKTCCSDKNINCFNYCILYGGAQNLNAAMVEAAKHDARMLINYCVMLGGRSLNEAKETAAMFGHIECAQHCFELQSYVMDALNADDAD.

This sequence belongs to the asfivirus MGF 360 family.

Plays a role in virus cell tropism, and may be required for efficient virus replication in macrophages. The sequence is that of Protein MGF 360-15R from Ornithodoros (relapsing fever ticks).